We begin with the raw amino-acid sequence, 378 residues long: Putative glutamate--cysteine ligase 2 (378 aa).

It belongs to the glutamate--cysteine ligase type 2 family. YbdK subfamily.

The enzyme catalyses L-cysteine + L-glutamate + ATP = gamma-L-glutamyl-L-cysteine + ADP + phosphate + H(+). Its function is as follows. ATP-dependent carboxylate-amine ligase which exhibits weak glutamate--cysteine ligase activity. In Jannaschia sp. (strain CCS1), this protein is Putative glutamate--cysteine ligase 2.